The primary structure comprises 122 residues: MPAARQQRGAAVEAAARALLEQAGLRLVVGNANYRGGELDLVMHDGPSLVFVEVRYRRDDRFGGGAASVDWRKRRKLVLAAQLFLGAHPALAALPCRFDVVDASGEPPVLHWIRDAFRADDC.

This sequence belongs to the UPF0102 family.

The chain is UPF0102 protein XAC0764 from Xanthomonas axonopodis pv. citri (strain 306).